Here is an 873-residue protein sequence, read N- to C-terminus: Putative receptor-like protein kinase At5g39000 (873 aa).

A signal peptide spans 1 to 21 (MIRHALLIFSILVSTPIVGEG). Topologically, residues 22-445 (ATSTYEPTDV…KNKSHILPIT (424 aa)) are extracellular. N49, N64, N138, N168, N216, N266, N300, N340, and N437 each carry an N-linked (GlcNAc...) asparagine glycan. The helical transmembrane segment at 446–466 (LAVVGSLVVLAMFVVGVLVIM) threads the bilayer. Topologically, residues 467 to 873 (KKKKKSKPST…FSEINEPKAR (407 aa)) are cytoplasmic. A disordered region spans residues 472–494 (SKPSTNSSWCPLPHGTDSTNTKP). A Protein kinase domain is found at 518–803 (FEDKLIIGVG…EFALQLHETA (286 aa)). Residues 524–532 (IGVGGFGSV) and K547 each bind ATP. Residue D646 is the Proton acceptor of the active site. Residues 813 to 843 (LDLMPSGEVGTTTDGEDDLFSRTTGHVGKST) form a disordered region. The segment covering 833-843 (SRTTGHVGKST) has biased composition (polar residues).

It belongs to the protein kinase superfamily. Ser/Thr protein kinase family.

The protein resides in the membrane. In Arabidopsis thaliana (Mouse-ear cress), this protein is Putative receptor-like protein kinase At5g39000.